The chain runs to 248 residues: MSQWEKVYGVHAVEALLRHHPKRVKQLWLAEGRHDPRVQVLTELAAGFRIPVGQRDRRELDEWAEGVHQGVVAEVSPSQVWGENMLEELLERSEGVPLLLALDGVTDPHNLGACLRTADAAGVQAVIVPKDKSATLNATVRKVACGAAEVIPLVAVTNLARTLEKLQQRGLWVVGTAGEADKTLYQLDLKGPTVLVMGAEGKGMRRLTREHCDFLARLPMAGSVSSLNVSVATGVCLFEILRQRTPLE.

Positions 198, 218, and 227 each coordinate S-adenosyl-L-methionine.

The protein belongs to the class IV-like SAM-binding methyltransferase superfamily. RNA methyltransferase TrmH family. RlmB subfamily.

The protein resides in the cytoplasm. It catalyses the reaction guanosine(2251) in 23S rRNA + S-adenosyl-L-methionine = 2'-O-methylguanosine(2251) in 23S rRNA + S-adenosyl-L-homocysteine + H(+). In terms of biological role, specifically methylates the ribose of guanosine 2251 in 23S rRNA. This chain is 23S rRNA (guanosine-2'-O-)-methyltransferase RlmB, found in Pseudomonas aeruginosa (strain ATCC 15692 / DSM 22644 / CIP 104116 / JCM 14847 / LMG 12228 / 1C / PRS 101 / PAO1).